Reading from the N-terminus, the 133-residue chain is Probable nuclear transport factor 2 (133 aa).

One can recognise an NTF2 domain in the interval 10 to 128; the sequence is VAKAFIQHYY…YFIGNEIFRL (119 aa).

It localises to the cytoplasm. Functionally, facilitates protein transport into the nucleus. Could be part of a multicomponent system of cytosolic factors that assemble at the pore complex during nuclear import. The polypeptide is Probable nuclear transport factor 2 (ran-4) (Caenorhabditis elegans).